The chain runs to 218 residues: Ohanin-like protein (218 aa).

The first 40 residues, 1-40 (MSPSAGFQFSLYFLQTKKVLWKLTGLCYILLFTLCFFADQ), serve as a signal peptide directing secretion. A propeptide spanning residues 41–48 (ENGGKALA) is cleaved from the precursor. The 107-residue stretch at 49–155 (SPPGIWKRAD…RIWQTGLWWL (107 aa)) folds into the B30.2/SPRY domain. Positions 156-218 (RHLETDPGRV…LGGTVSLTTL (63 aa)) are excised as a propeptide.

Belongs to the ohanin/vespryn family. Expressed by the venom gland.

The protein localises to the secreted. Its function is as follows. Neurotoxin that produces dose-dependent hypolocomotion and hyperalgesia in mice. May directly act on the central nervous system, as it is 6500-fold more potent when administered intracerebroventricularly than intraperitoneal. The polypeptide is Ohanin-like protein (Lachesis muta muta (Bushmaster)).